The primary structure comprises 256 residues: Hydroxyacylglutathione hydrolase (256 aa).

Positions 55, 57, 59, 60, 113, 130, and 168 each coordinate Zn(2+).

The protein belongs to the metallo-beta-lactamase superfamily. Glyoxalase II family. Monomer. The cofactor is Zn(2+).

It catalyses the reaction an S-(2-hydroxyacyl)glutathione + H2O = a 2-hydroxy carboxylate + glutathione + H(+). It participates in secondary metabolite metabolism; methylglyoxal degradation; (R)-lactate from methylglyoxal: step 2/2. In terms of biological role, thiolesterase that catalyzes the hydrolysis of S-D-lactoyl-glutathione to form glutathione and D-lactic acid. The polypeptide is Hydroxyacylglutathione hydrolase (Alkalilimnicola ehrlichii (strain ATCC BAA-1101 / DSM 17681 / MLHE-1)).